A 1015-amino-acid polypeptide reads, in one-letter code: DNA ligase 3 (1015 aa).

The segment at 94–186 (FCVDYAKRGT…QISQHIADLS (93 aa)) adopts a PARP-type zinc-finger fold. The Zn(2+) site is built by C106, C109, H140, and C143. Residues S211, S217, S228, and S244 each carry the phosphoserine modification. The interval 229-255 (GFSAAKPNNSEQAPSSPAPGTSLSASK) is disordered. Residues 234–253 (KPNNSEQAPSSPAPGTSLSA) are compositionally biased toward polar residues. Interaction with DNA stretches follow at residues 279-282 (PSYN), 323-328 (VYNLND), 393-396 (TKED), and 426-432 (KMNSGAK). E511 contributes to the ATP binding site. The active-site N6-AMP-lysine intermediate is K513. The ATP site is built by R518 and R533. The Mg(2+) site is built by E565 and E660. K665, R676, and K680 together coordinate ATP. The disordered stretch occupies residues 849-926 (DEASPTTGGS…KSSPVKVGMK (78 aa)). The span at 854–884 (TTGGSSGENEGTAGSAGPCKGPPSKSSASAK) shows a compositional bias: low complexity. Residue S919 is modified to Phosphoserine. The 77-residue stretch at 939–1015 (VLLDVFTGVR…IRKRRLIAPC (77 aa)) folds into the BRCT domain.

Belongs to the ATP-dependent DNA ligase family. In terms of assembly, isoform 3 interacts (via BRCT domain) with the nuclear DNA-repair protein XRCC1. Interacts with POLG. Interacts with POLB. The cofactor is Mg(2+). The alpha isoform is expressed in all tissues, while the beta isoform is expressed only in the testis.

The protein resides in the nucleus. The enzyme catalyses ATP + (deoxyribonucleotide)n-3'-hydroxyl + 5'-phospho-(deoxyribonucleotide)m = (deoxyribonucleotide)n+m + AMP + diphosphate.. Functionally, the alpha isoform interacts with DNA-repair protein XRCC1 and can correct defective DNA strand-break repair and sister chromatid exchange following treatment with ionizing radiation and alkylating agents. The beta isoform does not interact with XRCC1 and may be specifically involved in the completion of homologous recombination events that occur during meiotic prophase. In Mus musculus (Mouse), this protein is DNA ligase 3 (Lig3).